Consider the following 157-residue polypeptide: Ribosome maturation factor RimM (157 aa).

One can recognise a PRC barrel domain in the interval 89-156; that stretch reads PGEYYHVDLI…DRLLIDPEFV (68 aa).

Belongs to the RimM family. In terms of assembly, binds ribosomal protein uS19.

It is found in the cytoplasm. Functionally, an accessory protein needed during the final step in the assembly of 30S ribosomal subunit, possibly for assembly of the head region. Essential for efficient processing of 16S rRNA. May be needed both before and after RbfA during the maturation of 16S rRNA. It has affinity for free ribosomal 30S subunits but not for 70S ribosomes. The chain is Ribosome maturation factor RimM from Rhizorhabdus wittichii (strain DSM 6014 / CCUG 31198 / JCM 15750 / NBRC 105917 / EY 4224 / RW1) (Sphingomonas wittichii).